Consider the following 323-residue polypeptide: Fructokinase-1 (323 aa).

It belongs to the carbohydrate kinase PfkB family. Expressed in stems, at higher levels in roots, and hardly detectable in leaves.

The enzyme catalyses D-fructose + ATP = D-fructose 6-phosphate + ADP + H(+). It functions in the pathway glycan biosynthesis; starch biosynthesis. Its activity is regulated as follows. Inhibited at high fructose. May play an important role in maintaining the flux of carbon towards starch formation in endosperm. May also be involved in a sugar-sensing pathway. The polypeptide is Fructokinase-1 (FRK1) (Zea mays (Maize)).